A 251-amino-acid chain; its full sequence is tRNA1(Val) (adenine(37)-N6)-methyltransferase (251 aa).

This sequence belongs to the methyltransferase superfamily. tRNA (adenine-N(6)-)-methyltransferase family.

Its subcellular location is the cytoplasm. It catalyses the reaction adenosine(37) in tRNA1(Val) + S-adenosyl-L-methionine = N(6)-methyladenosine(37) in tRNA1(Val) + S-adenosyl-L-homocysteine + H(+). Its function is as follows. Specifically methylates the adenine in position 37 of tRNA(1)(Val) (anticodon cmo5UAC). The sequence is that of tRNA1(Val) (adenine(37)-N6)-methyltransferase from Yersinia enterocolitica serotype O:8 / biotype 1B (strain NCTC 13174 / 8081).